We begin with the raw amino-acid sequence, 283 residues long: Ribosomal RNA small subunit methyltransferase H (283 aa).

Residues 31–33 (GGH), D50, F77, D93, and Q100 contribute to the S-adenosyl-L-methionine site.

It belongs to the methyltransferase superfamily. RsmH family.

The protein resides in the cytoplasm. It carries out the reaction cytidine(1402) in 16S rRNA + S-adenosyl-L-methionine = N(4)-methylcytidine(1402) in 16S rRNA + S-adenosyl-L-homocysteine + H(+). Functionally, specifically methylates the N4 position of cytidine in position 1402 (C1402) of 16S rRNA. In Trichodesmium erythraeum (strain IMS101), this protein is Ribosomal RNA small subunit methyltransferase H.